A 729-amino-acid polypeptide reads, in one-letter code: Fatty acid oxidation complex subunit alpha (729 aa).

An enoyl-CoA hydratase/isomerase region spans residues 1-189 (MLYKGDTLYV…KIGLIDGIVK (189 aa)). D296 is a binding site for substrate. The segment at 311 to 729 (EMPKQAAVLG…ARPVGALKTA (419 aa)) is 3-hydroxyacyl-CoA dehydrogenase. NAD(+) contacts are provided by residues M324, D343, 400-402 (VVE), K407, and S429. H450 acts as the For 3-hydroxyacyl-CoA dehydrogenase activity in catalysis. N453 serves as a coordination point for NAD(+). The substrate site is built by N500 and Y660. The segment at 708 to 729 (RHNEPYYPPVEPARPVGALKTA) is disordered.

The protein in the N-terminal section; belongs to the enoyl-CoA hydratase/isomerase family. This sequence in the C-terminal section; belongs to the 3-hydroxyacyl-CoA dehydrogenase family. As to quaternary structure, heterotetramer of two alpha chains (FadB) and two beta chains (FadA).

It carries out the reaction a (3S)-3-hydroxyacyl-CoA + NAD(+) = a 3-oxoacyl-CoA + NADH + H(+). The catalysed reaction is a (3S)-3-hydroxyacyl-CoA = a (2E)-enoyl-CoA + H2O. The enzyme catalyses a 4-saturated-(3S)-3-hydroxyacyl-CoA = a (3E)-enoyl-CoA + H2O. It catalyses the reaction (3S)-3-hydroxybutanoyl-CoA = (3R)-3-hydroxybutanoyl-CoA. It carries out the reaction a (3Z)-enoyl-CoA = a 4-saturated (2E)-enoyl-CoA. The catalysed reaction is a (3E)-enoyl-CoA = a 4-saturated (2E)-enoyl-CoA. The protein operates within lipid metabolism; fatty acid beta-oxidation. In terms of biological role, involved in the aerobic and anaerobic degradation of long-chain fatty acids via beta-oxidation cycle. Catalyzes the formation of 3-oxoacyl-CoA from enoyl-CoA via L-3-hydroxyacyl-CoA. It can also use D-3-hydroxyacyl-CoA and cis-3-enoyl-CoA as substrate. This is Fatty acid oxidation complex subunit alpha from Enterobacter sp. (strain 638).